The chain runs to 78 residues: MAVFHDEVEIEDFQYDEDSETYFCPCPCGDNFSITKEELENGEGVAMCPGCSLIIKVIYDKDQFACGETVPVPSVNKE.

The DPH-type MB domain occupies 4 to 60 (FHDEVEIEDFQYDEDSETYFCPCPCGDNFSITKEELENGEGVAMCPGCSLIIKVIYD). Zn(2+) is bound by residues C26, C28, C48, and C51.

This sequence belongs to the DPH3 family.

This is Putative DPH3 homolog B (DPH3P1) from Homo sapiens (Human).